We begin with the raw amino-acid sequence, 299 residues long: Cancer/testis antigen family 47 member B1 (299 aa).

Over residues 1 to 10 (MSATGDRHPT) the composition is skewed to basic and acidic residues. Disordered stretches follow at residues 1–102 (MSAT…EGNE) and 215–299 (AREP…SKGT). Low complexity-rich tracts occupy residues 20-31 (QEGAQAEAAGAG) and 46-60 (VPAA…PVEG). Positions 81–101 (AEEDSDIGPATEEEEEEEEGN) are enriched in acidic residues. Positions 215 to 238 (AREPAEEAADEKPPEEAAEEKLTE) are enriched in basic and acidic residues. Composition is skewed to acidic residues over residues 239 to 251 (EATE…EPTS) and 268 to 281 (WDEE…EEEK). The stretch at 270 to 298 (EEAQDAAGEEEKEQEKEKDVENKVKNSKG) forms a coiled coil. A compositionally biased stretch (basic and acidic residues) spans 282–293 (EQEKEKDVENKV).

Belongs to the CT47 family.

The protein is Cancer/testis antigen family 47 member B1 of Homo sapiens (Human).